Here is a 194-residue protein sequence, read N- to C-terminus: ATP-dependent Clp protease proteolytic subunit (194 aa).

Ser-97 acts as the Nucleophile in catalysis. His-122 is an active-site residue.

This sequence belongs to the peptidase S14 family. In terms of assembly, fourteen ClpP subunits assemble into 2 heptameric rings which stack back to back to give a disk-like structure with a central cavity, resembling the structure of eukaryotic proteasomes.

It localises to the cytoplasm. The catalysed reaction is Hydrolysis of proteins to small peptides in the presence of ATP and magnesium. alpha-casein is the usual test substrate. In the absence of ATP, only oligopeptides shorter than five residues are hydrolyzed (such as succinyl-Leu-Tyr-|-NHMec, and Leu-Tyr-Leu-|-Tyr-Trp, in which cleavage of the -Tyr-|-Leu- and -Tyr-|-Trp bonds also occurs).. Its function is as follows. Cleaves peptides in various proteins in a process that requires ATP hydrolysis. Has a chymotrypsin-like activity. Plays a major role in the degradation of misfolded proteins. The chain is ATP-dependent Clp protease proteolytic subunit from Carsonella ruddii (strain PV).